Reading from the N-terminus, the 307-residue chain is Histone deacetylase HDT1 (307 aa).

The span at 98 to 112 (EDEMDLDSEDEDEEL) shows a compositional bias: acidic residues. Positions 98–280 (EDEMDLDSED…KSGGSVPCKP (183 aa)) are disordered. A compositionally biased stretch (basic and acidic residues) spans 119–132 (ENGKADEKKQKSQE). Acidic residues predominate over residues 151-197 (DDDSDEDETDDSDEDETDDSDEGLSSEEGDDDSSDEDDTSDDEEEDT). Over residues 198–211 (PTPKKPEVGKKRPA) the composition is skewed to basic and acidic residues. Over residues 265–277 (SPKSAPKSGGSVP) the composition is skewed to low complexity. A C2H2-type; degenerate zinc finger spans residues 276-299 (VPCKPCSKSFISETALQAHSRAKM).

Belongs to the histone deacetylase HD2 family. In terms of assembly, multimer. Isolated as a trimer composed of 3 proteins of 39, 42 and 45 kDa, possibly a homotrimer with different phosphorylation status or a heterotrimer with HDT2 and/or HDT3. The N-terminus is blocked. Post-translationally, phosphorylated. Required for enzyme activity.

Its subcellular location is the nucleus. The protein resides in the nucleolus. Its activity is regulated as follows. Inhibited by 3-(4-Aroyl-1-methyl-1H-pyrrol-2-yl)-N-hydroxy-2-propenamides. 3-(1-methyl-4-phenylacetyl-1H-pyrrol-2-yl)-N-hydroxy-2-propenamide 1b and 3-[1-methyl-4-(3-phenyl-2-propenoyl)-1H-pyrrol-2-yl]-N-hydroxy-2-propenamide 1c are very potent inhibitors. Mediates the deacetylation of lysine residues on the N-terminal part of the core histones (H2A, H2B, H3 and H4). Histone deacetylation gives a tag for epigenetic repression and plays an important role in transcriptional regulation, cell cycle progression and developmental events. Able to deacetylate all 4 core histones. In Zea mays (Maize), this protein is Histone deacetylase HDT1 (HDT1).